Here is a 322-residue protein sequence, read N- to C-terminus: NADH-cytochrome b5 reductase 2 (322 aa).

The chain crosses the membrane as a helical span at residues 30–46; the sequence is LAPVYVAVGLAGLGVGL. One can recognise an FAD-binding FR-type domain in the interval 71–176; it reads QGWVNLKLSD…KGPLPKYPWE (106 aa). 179–214 is a binding site for FAD; it reads KHKHICLVAGGTGITPMYQLAREIFKNPEDKTKVTL.

The protein belongs to the flavoprotein pyridine nucleotide cytochrome reductase family. The cofactor is FAD.

It localises to the mitochondrion outer membrane. The catalysed reaction is 2 Fe(III)-[cytochrome b5] + NADH = 2 Fe(II)-[cytochrome b5] + NAD(+) + H(+). Functionally, may mediate the reduction of outer membrane cytochrome b5. In Emericella nidulans (strain FGSC A4 / ATCC 38163 / CBS 112.46 / NRRL 194 / M139) (Aspergillus nidulans), this protein is NADH-cytochrome b5 reductase 2 (mcr1).